Reading from the N-terminus, the 2671-residue chain is Inositol 1,4,5-trisphosphate-gated calcium channel ITPR3 (2671 aa).

At Met-1–Thr-2202 the chain is on the cytoplasmic side. MIR domains follow at residues Gly-113–Asn-173, Gly-174–Phe-224, Glu-232–Val-288, Gly-295–Thr-372, and Asp-378–Val-434. 1D-myo-inositol 1,4,5-trisphosphate contacts are provided by Arg-266, Thr-268, Leu-269, and Arg-270. The disordered stretch occupies residues Ser-322–Gly-342. The 1D-myo-inositol 1,4,5-trisphosphate site is built by Arg-503, Lys-507, Arg-510, Tyr-567, Arg-568, and Lys-569. Residue Arg-743 participates in Ca(2+) binding. Phosphoserine occurs at positions 916 and 934. 2 residues coordinate Ca(2+): Glu-1122 and Glu-1125. Disordered regions lie at residues Gly-1132–Glu-1163 and Asn-1809–Leu-1848. Ser-1813, Ser-1832, and Ser-1834 each carry phosphoserine. Ca(2+)-binding residues include Glu-1882 and Glu-1946. Positions 1996, 2149, and 2152 each coordinate ATP. The chain crosses the membrane as a helical span at residues Leu-2203 to Tyr-2223. The Extracellular segment spans residues Pro-2224–Asp-2235. A helical transmembrane segment spans residues Ser-2236–Thr-2256. Residues Lys-2257–Leu-2264 are Cytoplasmic-facing. The helical transmembrane segment at Ile-2265–Leu-2285 threads the bilayer. Over Gly-2286–Gly-2325 the chain is Extracellular. The chain crosses the membrane as a helical span at residues Tyr-2326–Phe-2346. Residues Asp-2347–Ser-2368 lie on the Cytoplasmic side of the membrane. The helical transmembrane segment at Ile-2369–Leu-2389 threads the bilayer. Residues Phe-2390 to Tyr-2496 lie on the Extracellular side of the membrane. Residues Cys-2455 and Cys-2461 are joined by a disulfide bond. A helical membrane pass occupies residues Asp-2497 to Ile-2517. Over Asp-2518–Arg-2671 the chain is Cytoplasmic. ATP is bound by residues Cys-2538 and Phe-2539. Cys-2538 is a Zn(2+) binding site. The Zn(2+) site is built by Cys-2541 and His-2558. Residues Lys-2560, His-2563, Asn-2564, and Met-2565 each contribute to the ATP site. His-2563 serves as a coordination point for Zn(2+). Thr-2581 is a binding site for Ca(2+). Phosphoserine is present on residues Ser-2609 and Ser-2670.

This sequence belongs to the InsP3 receptor family. As to quaternary structure, homotetramer. Homodimer. Interacts with TRPC1, TRPC3 and TRPC4. Interacts with TRPV4. Interacts with SIGMAR1. Interacts with PML and AKT1. Interacts with IRAG2 (via coiled-coil domain). Interacts with CABP1. Interacts with TMBIM4/LFG4. Interacts with CEMIP. Interacts with TESPA1. Interacts with TMEM203. Interacts with BOK; regulates ITPR3 expression. Interacts with BCL2L10. Interacts with CHGA and CHGB. Phosphorylated by AKT1 on serine and/or threonine residues. As to expression, expressed in intestinal crypt and villus epithelial cells.

It localises to the endoplasmic reticulum membrane. It is found in the cytoplasmic vesicle. The protein resides in the secretory vesicle membrane. The enzyme catalyses Ca(2+)(in) = Ca(2+)(out). Inositol 1,4,5-trisphosphate-gated calcium channel is regulated by cytosolic calcium in a biphasic manner. At low concentrations, cytosolic calcium binds at a high-affinity juxtamembrane domain (JD) calcium binding site, allowing ITPR3 to activate by escaping a low-energy resting state through an ensemble of preactivated states. At high cytosolic calcium concentrations, ITPR3 preferentially enters an inhibited state stabilized by calcium binding at a second, low-affinity cytoplasmic domain (CD) calcium binding site. In terms of biological role, inositol 1,4,5-trisphosphate-gated calcium channel that, upon 1D-myo-inositol 1,4,5-trisphosphate binding, transports calcium from the endoplasmic reticulum lumen to cytoplasm, thus releasing the intracellular calcium and therefore participates in cellular calcium ion homeostasis. 1D-myo-inositol 1,4,5-trisphosphate binds to the ligand-free channel without altering its global conformation, yielding the low-energy resting state, then progresses through resting-to preactivated transitions to the higher energy preactivated state, which increases affinity for calcium, promoting binding of the low basal cytosolic calcium at the juxtamembrane domain (JD) site, favoring the transition through the ensemble of high-energy intermediate states along the trajectory to the fully-open activated state. Upon opening, releases calcium in the cytosol where it can bind to the low-affinity cytoplasmic domain (CD) site and stabilizes the inhibited state to terminate calcium release. The protein is Inositol 1,4,5-trisphosphate-gated calcium channel ITPR3 of Homo sapiens (Human).